Here is a 415-residue protein sequence, read N- to C-terminus: uncharacterized protein (415 aa).

[4Fe-4S] cluster-binding residues include C85, C91, C94, and C175. Residues Q248, Y276, E297, and N344 each contribute to the S-adenosyl-L-methionine site. Residue C371 is the Nucleophile of the active site.

The protein belongs to the class I-like SAM-binding methyltransferase superfamily. RNA M5U methyltransferase family.

This is an uncharacterized protein from Leptospira interrogans serogroup Icterohaemorrhagiae serovar Lai (strain 56601).